Consider the following 855-residue polypeptide: Envelope glycoprotein gp150 (855 aa).

Topologically, residues 1–784 (MAEGFAANRQ…WIGNIPQYLK (784 aa)) are extracellular. Asn-220, Asn-258, Asn-269, Asn-274, Asn-298, Asn-336, Asn-418, Asn-422, Asn-448, Asn-469, Asn-481, Asn-499, Asn-518, Asn-531, Asn-548, and Asn-551 each carry an N-linked (GlcNAc...) asparagine; by host glycan. A fusion peptide region spans residues 615–635 (VMLALATVLSMAGAGTGATAI). Residues 642–692 (HQVLATHQETIEKVTEALKINNLRLVTLEHQVLVIGLKVEAMEKFLYTAFA) are a coiled coil. Residues 661 to 679 (INNLRLVTLEHQVLVIGLK) are immunosuppression. Asn-716, Asn-720, Asn-728, and Asn-736 each carry an N-linked (GlcNAc...) asparagine; by host glycan. Positions 735-771 (YNQTKELQQKFYEIIMNIEQNNVQVKKGLQQLQEWED) form a coiled coil. A helical membrane pass occupies residues 785 to 805 (GLLGGILGIGIGVLLLILCLP). Residues 806–855 (TLVDCIRNCISKVLGYTVIAMPEIGDEEETVQMELRKNGRQCGMSEKEEE) are Cytoplasmic-facing.

In terms of assembly, the mature envelope protein (Env) consists of a trimer of SU-TM heterodimers attached by noncovalent interactions or by a labile interchain disulfide bond. In terms of processing, specific enzymatic cleavages in vivo yield mature proteins. Envelope glycoproteins are synthesized as an inactive precursor that is N-glycosylated and processed likely by host cell furin or by a furin-like protease in the Golgi to yield the mature SU and TM proteins. The cleavage site between SU and TM requires the minimal sequence [KR]-X-[KR]-R.

The protein resides in the virion membrane. The protein localises to the host cell membrane. Its function is as follows. The surface protein (SU) attaches the virus to the host cell by binding to its receptor. This interaction triggers the refolding of the transmembrane protein (TM) and is thought to activate its fusogenic potential by unmasking its fusion peptide. Fusion occurs at the host cell plasma membrane. In terms of biological role, the transmembrane protein (TM) acts as a class I viral fusion protein. Under the current model, the protein has at least 3 conformational states: pre-fusion native state, pre-hairpin intermediate state, and post-fusion hairpin state. During viral and target cell membrane fusion, the coiled coil regions (heptad repeats) assume a trimer-of-hairpins structure, positioning the fusion peptide in close proximity to the C-terminal region of the ectodomain. The formation of this structure appears to drive apposition and subsequent fusion of viral and target cell membranes. Membranes fusion leads to delivery of the nucleocapsid into the cytoplasm. The protein is Envelope glycoprotein gp150 (env) of Felidae (cat family).